A 183-amino-acid chain; its full sequence is (2E)-enoyl-[ACP] glycyltransferase (183 aa).

The protein belongs to the FcoT family.

It catalyses the reaction a (3R)-3-[(carboxymethyl)amino]fatty acid + holo-[ACP] + H(+) = a (2E)-enoyl-[ACP] + glycine + H2O. It carries out the reaction (3R)-3-[(carboxylmethyl)amino]decanoate + holo-[ACP] + H(+) = (2E)-decenoyl-[ACP] + glycine + H2O. The catalysed reaction is a fatty acyl-CoA + H2O = a fatty acid + CoA + H(+). Involved in the biosynthesis of a unique class of isonitrile lipopeptides (INLPs) that seem to play a role in metal acquisition. Catalyzes a Michael addition of glycine to the beta-position of an alpha,beta-unsaturated fatty acyl-[ACP], producing a (3R)-3-[(carboxymethyl)amino]fatty acid. Acts on the (2E)-decenoyl moiety loaded on the acyl-carrier protein (ACP) BQ2027_MB0103, forming the product (3R)-3-[(carboxymethyl)amino]decanoate released from the ACP. Displays thioesterase activity with a preference for long chain fatty acyl groups. In Mycobacterium bovis (strain ATCC BAA-935 / AF2122/97), this protein is (2E)-enoyl-[ACP] glycyltransferase.